The chain runs to 268 residues: Cytochrome c oxidase subunit 3 (268 aa).

Transmembrane regions (helical) follow at residues Ile-23–Phe-43, Trp-49–Ile-69, Ile-88–Phe-108, Thr-141–Gly-161, Thr-166–Met-186, Val-203–Gly-223, and Ile-246–Trp-266.

This sequence belongs to the cytochrome c oxidase subunit 3 family. In terms of assembly, component of the cytochrome c oxidase (complex IV, CIV), a multisubunit enzyme composed of a catalytic core of 3 subunits and several supernumerary subunits. The complex exists as a monomer or a dimer and forms supercomplexes (SCs) in the inner mitochondrial membrane with ubiquinol-cytochrome c oxidoreductase (cytochrome b-c1 complex, complex III, CIII).

Its subcellular location is the mitochondrion inner membrane. The catalysed reaction is 4 Fe(II)-[cytochrome c] + O2 + 8 H(+)(in) = 4 Fe(III)-[cytochrome c] + 2 H2O + 4 H(+)(out). Its function is as follows. Component of the cytochrome c oxidase, the last enzyme in the mitochondrial electron transport chain which drives oxidative phosphorylation. The respiratory chain contains 3 multisubunit complexes succinate dehydrogenase (complex II, CII), ubiquinol-cytochrome c oxidoreductase (cytochrome b-c1 complex, complex III, CIII) and cytochrome c oxidase (complex IV, CIV), that cooperate to transfer electrons derived from NADH and succinate to molecular oxygen, creating an electrochemical gradient over the inner membrane that drives transmembrane transport and the ATP synthase. Cytochrome c oxidase is the component of the respiratory chain that catalyzes the reduction of oxygen to water. Electrons originating from reduced cytochrome c in the intermembrane space (IMS) are transferred via the dinuclear copper A center (CU(A)) of subunit 2 and heme A of subunit 1 to the active site in subunit 1, a binuclear center (BNC) formed by heme A3 and copper B (CU(B)). The BNC reduces molecular oxygen to 2 water molecules using 4 electrons from cytochrome c in the IMS and 4 protons from the mitochondrial matrix. The polypeptide is Cytochrome c oxidase subunit 3 (COX3) (Yarrowia lipolytica (strain CLIB 122 / E 150) (Yeast)).